The following is a 538-amino-acid chain: MFS-type transporter oryC (538 aa).

6 helical membrane-spanning segments follow: residues 14–34 (LTGGWLTFWVTVACATDMSLF), 67–87 (TVTAIYDVGCFFGAIVAFTIG), 96–116 (ILLGTTIMAIGAVLQAASFSL), 120–140 (FVGRIILGIGNGINTATAPIW), 162–182 (IFGFCLVNWINYGLSFVGGSI), and 186–206 (FPLAFQFFFLIILWSTTPWLP). Asn-268 carries an N-linked (GlcNAc...) asparagine glycan. Transmembrane regions (helical) follow at residues 288 to 308 (FGGINIMSYYLPTVLMDSVGL), 315 to 335 (LLAACNALSYLVFSGLAVLLV), 342 to 362 (GLMLLSTFGQFLCFLIITILL), 379 to 399 (VAFFFLYYGAFGIGMLGVPWL), 416 to 436 (VATATDWITNFVVVEITPIGI), and 443 to 463 (FWIVWTVTNAAFLPILYFLYP). Asn-467 carries an N-linked (GlcNAc...) asparagine glycan.

This sequence belongs to the major facilitator superfamily. Sugar transporter (TC 2.A.1.1) family.

The protein localises to the membrane. In terms of biological role, MFS-type transporter; part of the gene cluster that mediates the biosynthesis of oryzines, natural products with an unusual maleidride backbone. The protein is MFS-type transporter oryC of Aspergillus oryzae (strain ATCC 42149 / RIB 40) (Yellow koji mold).